Reading from the N-terminus, the 224-residue chain is Phosphoribosylformylglycinamidine synthase subunit PurQ (224 aa).

The 223-residue stretch at lysine 2–alanine 224 folds into the Glutamine amidotransferase type-1 domain. The Nucleophile role is filled by cysteine 86. Residues histidine 200 and glutamate 202 contribute to the active site.

Part of the FGAM synthase complex composed of 1 PurL, 1 PurQ and 2 PurS subunits.

Its subcellular location is the cytoplasm. It catalyses the reaction N(2)-formyl-N(1)-(5-phospho-beta-D-ribosyl)glycinamide + L-glutamine + ATP + H2O = 2-formamido-N(1)-(5-O-phospho-beta-D-ribosyl)acetamidine + L-glutamate + ADP + phosphate + H(+). The enzyme catalyses L-glutamine + H2O = L-glutamate + NH4(+). It participates in purine metabolism; IMP biosynthesis via de novo pathway; 5-amino-1-(5-phospho-D-ribosyl)imidazole from N(2)-formyl-N(1)-(5-phospho-D-ribosyl)glycinamide: step 1/2. Functionally, part of the phosphoribosylformylglycinamidine synthase complex involved in the purines biosynthetic pathway. Catalyzes the ATP-dependent conversion of formylglycinamide ribonucleotide (FGAR) and glutamine to yield formylglycinamidine ribonucleotide (FGAM) and glutamate. The FGAM synthase complex is composed of three subunits. PurQ produces an ammonia molecule by converting glutamine to glutamate. PurL transfers the ammonia molecule to FGAR to form FGAM in an ATP-dependent manner. PurS interacts with PurQ and PurL and is thought to assist in the transfer of the ammonia molecule from PurQ to PurL. The polypeptide is Phosphoribosylformylglycinamidine synthase subunit PurQ (Sulfurimonas denitrificans (strain ATCC 33889 / DSM 1251) (Thiomicrospira denitrificans (strain ATCC 33889 / DSM 1251))).